The primary structure comprises 132 residues: Protein MrkF (132 aa).

The protein resides in the fimbrium. Functionally, appears to affect the stability of the intact fimbriae on the cell surface. The chain is Protein MrkF (mrkF) from Klebsiella pneumoniae.